The chain runs to 735 residues: 1,4-alpha-glucan branching enzyme GlgB (735 aa).

Catalysis depends on aspartate 418, which acts as the Nucleophile. Glutamate 471 functions as the Proton donor in the catalytic mechanism.

This sequence belongs to the glycosyl hydrolase 13 family. GlgB subfamily. As to quaternary structure, monomer.

It catalyses the reaction Transfers a segment of a (1-&gt;4)-alpha-D-glucan chain to a primary hydroxy group in a similar glucan chain.. The protein operates within glycan biosynthesis; glycogen biosynthesis. In terms of biological role, catalyzes the formation of the alpha-1,6-glucosidic linkages in glycogen by scission of a 1,4-alpha-linked oligosaccharide from growing alpha-1,4-glucan chains and the subsequent attachment of the oligosaccharide to the alpha-1,6 position. The chain is 1,4-alpha-glucan branching enzyme GlgB from Agrobacterium fabrum (strain C58 / ATCC 33970) (Agrobacterium tumefaciens (strain C58)).